Here is an 884-residue protein sequence, read N- to C-terminus: Nonsense-mediated mRNA decay factor EBS1 (884 aa).

Disordered stretches follow at residues Asn-596–Gly-645 and Gln-755–Tyr-774. Residues Arg-633–Gly-645 show a composition bias toward polar residues. Positions Ser-760–Ser-772 are enriched in low complexity.

This sequence belongs to the EST1 family. In terms of assembly, interacts with NMD helicase UPF1. Interacts with CDC33.

The protein localises to the nucleus. Its subcellular location is the chromosome. The protein resides in the telomere. It localises to the cytoplasm. It is found in the P-body. Functionally, plays a role in nonsense-mediated mRNA decay (NMD). Recruits UPF1 to cytoplasmic mRNA decay bodies (P-bodies). Negative regulator of gene expression. Inhibits translation most likely through effects on eIF-4E (CDC33). Involved in telomere maintenance. The chain is Nonsense-mediated mRNA decay factor EBS1 from Saccharomyces cerevisiae (strain ATCC 204508 / S288c) (Baker's yeast).